Here is a 503-residue protein sequence, read N- to C-terminus: Glycerol kinase (503 aa).

ADP is bound at residue Thr-14. ATP contacts are provided by Thr-14, Thr-15, and Ser-16. Thr-14 is a sn-glycerol 3-phosphate binding site. Arg-18 serves as a coordination point for ADP. Sn-glycerol 3-phosphate is bound by residues Arg-84, Glu-85, Tyr-136, and Asp-246. The glycerol site is built by Arg-84, Glu-85, Tyr-136, Asp-246, and Gln-247. Residues Thr-268 and Gly-311 each contribute to the ADP site. The ATP site is built by Thr-268, Gly-311, Gln-315, and Gly-412. ADP is bound by residues Gly-412 and Asn-416.

This sequence belongs to the FGGY kinase family. As to quaternary structure, homotetramer and homodimer (in equilibrium). Heterodimer with EIIA-Glc. Binds 1 zinc ion per glycerol kinase EIIA-Glc dimer. The zinc ion is important for dimerization.

The catalysed reaction is glycerol + ATP = sn-glycerol 3-phosphate + ADP + H(+). The protein operates within polyol metabolism; glycerol degradation via glycerol kinase pathway; sn-glycerol 3-phosphate from glycerol: step 1/1. Its activity is regulated as follows. Activity of this regulatory enzyme is affected by several metabolites. Allosterically and non-competitively inhibited by fructose 1,6-bisphosphate (FBP) and unphosphorylated phosphocarrier protein EIIA-Glc (III-Glc), an integral component of the bacterial phosphotransferase (PTS) system. Functionally, key enzyme in the regulation of glycerol uptake and metabolism. Catalyzes the phosphorylation of glycerol to yield sn-glycerol 3-phosphate. The chain is Glycerol kinase from Klebsiella pneumoniae subsp. pneumoniae (strain ATCC 700721 / MGH 78578).